A 529-amino-acid polypeptide reads, in one-letter code: Bifunctional purine biosynthesis protein PurH (529 aa).

Residues 1–148 (MQQRRPIRRA…KNHKDVAIVV (148 aa)) enclose the MGS-like domain. Lys287 carries the N6-acetyllysine modification.

The protein belongs to the PurH family.

It catalyses the reaction (6R)-10-formyltetrahydrofolate + 5-amino-1-(5-phospho-beta-D-ribosyl)imidazole-4-carboxamide = 5-formamido-1-(5-phospho-D-ribosyl)imidazole-4-carboxamide + (6S)-5,6,7,8-tetrahydrofolate. The enzyme catalyses IMP + H2O = 5-formamido-1-(5-phospho-D-ribosyl)imidazole-4-carboxamide. Its pathway is purine metabolism; IMP biosynthesis via de novo pathway; 5-formamido-1-(5-phospho-D-ribosyl)imidazole-4-carboxamide from 5-amino-1-(5-phospho-D-ribosyl)imidazole-4-carboxamide (10-formyl THF route): step 1/1. It functions in the pathway purine metabolism; IMP biosynthesis via de novo pathway; IMP from 5-formamido-1-(5-phospho-D-ribosyl)imidazole-4-carboxamide: step 1/1. The chain is Bifunctional purine biosynthesis protein PurH from Escherichia coli O139:H28 (strain E24377A / ETEC).